The sequence spans 418 residues: Glutamyl-tRNA reductase (418 aa).

Substrate contacts are provided by residues 49 to 52 (TCNR), S109, 114 to 116 (EPQ), and Q120. C50 serves as the catalytic Nucleophile. 189–194 (GAGETI) lines the NADP(+) pocket.

Belongs to the glutamyl-tRNA reductase family. In terms of assembly, homodimer.

It catalyses the reaction (S)-4-amino-5-oxopentanoate + tRNA(Glu) + NADP(+) = L-glutamyl-tRNA(Glu) + NADPH + H(+). It participates in porphyrin-containing compound metabolism; protoporphyrin-IX biosynthesis; 5-aminolevulinate from L-glutamyl-tRNA(Glu): step 1/2. Functionally, catalyzes the NADPH-dependent reduction of glutamyl-tRNA(Glu) to glutamate 1-semialdehyde (GSA). The sequence is that of Glutamyl-tRNA reductase from Escherichia coli O127:H6 (strain E2348/69 / EPEC).